Consider the following 157-residue polypeptide: MGRITSSRSQLIGDPRHHSLLASKFINCLMLDGKKTTAQRVFYDALEEIGKRHEGEETPIEVFEAALENIKPYIEVRSKRVGGASYQVPMQVNKARQQSLAIRWILAAVRDKKGRPMALKLADELLAGFKKEGAAYTKRENTHRMADANKAFAHFAW.

Belongs to the universal ribosomal protein uS7 family. In terms of assembly, part of the 30S ribosomal subunit. Contacts proteins S9 and S11.

One of the primary rRNA binding proteins, it binds directly to 16S rRNA where it nucleates assembly of the head domain of the 30S subunit. Is located at the subunit interface close to the decoding center, probably blocks exit of the E-site tRNA. The protein is Small ribosomal subunit protein uS7 of Rhodopirellula baltica (strain DSM 10527 / NCIMB 13988 / SH1).